The following is a 73-amino-acid chain: Translation initiation factor IF-1 3 (73 aa).

The S1-like domain maps to 1-72; it reads MAKEELVEFG…TKGRINYRHK (72 aa).

The protein belongs to the IF-1 family. Component of the 30S ribosomal translation pre-initiation complex which assembles on the 30S ribosome in the order IF-2 and IF-3, IF-1 and N-formylmethionyl-tRNA(fMet); mRNA recruitment can occur at any time during PIC assembly.

The protein resides in the cytoplasm. Functionally, one of the essential components for the initiation of protein synthesis. Stabilizes the binding of IF-2 and IF-3 on the 30S subunit to which N-formylmethionyl-tRNA(fMet) subsequently binds. Helps modulate mRNA selection, yielding the 30S pre-initiation complex (PIC). Upon addition of the 50S ribosomal subunit IF-1, IF-2 and IF-3 are released leaving the mature 70S translation initiation complex. The protein is Translation initiation factor IF-1 3 of Cupriavidus metallidurans (strain ATCC 43123 / DSM 2839 / NBRC 102507 / CH34) (Ralstonia metallidurans).